The primary structure comprises 388 residues: S-adenosylmethionine synthase 1 (388 aa).

Mg(2+) is bound at residue Glu11. ATP is bound at residue His17. Position 45 (Glu45) interacts with K(+). 2 residues coordinate L-methionine: Glu58 and Gln101. ATP contacts are provided by residues 168–170 (DAK), 233–236 (SGRF), Asp244, 250–251 (RK), Ala267, Lys271, and Lys275. Asp244 is a binding site for L-methionine. Lys275 is a binding site for L-methionine.

This sequence belongs to the AdoMet synthase family. Homotetramer. Requires Mn(2+) as cofactor. Mg(2+) serves as cofactor. It depends on Co(2+) as a cofactor. K(+) is required as a cofactor. Mostly in Roots.

Its subcellular location is the cytoplasm. It catalyses the reaction L-methionine + ATP + H2O = S-adenosyl-L-methionine + phosphate + diphosphate. It participates in amino-acid biosynthesis; S-adenosyl-L-methionine biosynthesis; S-adenosyl-L-methionine from L-methionine: step 1/1. Functionally, catalyzes the formation of S-adenosylmethionine from methionine and ATP. The reaction comprises two steps that are both catalyzed by the same enzyme: formation of S-adenosylmethionine (AdoMet) and triphosphate, and subsequent hydrolysis of the triphosphate. In Pinus contorta (Shore pine), this protein is S-adenosylmethionine synthase 1 (SAMS1).